The primary structure comprises 400 residues: Formate-dependent phosphoribosylglycinamide formyltransferase (400 aa).

Residues 22-23 (EL) and Glu82 each bind N(1)-(5-phospho-beta-D-ribosyl)glycinamide. ATP-binding positions include Arg115, Lys156, 161 to 166 (SSGKGQ), 196 to 199 (EGFI), and Glu204. Residues 120 to 309 (RLAAETLGLP…EFALHARAIL (190 aa)) form the ATP-grasp domain. Mg(2+)-binding residues include Glu268 and Glu280. N(1)-(5-phospho-beta-D-ribosyl)glycinamide is bound by residues Asp287, Lys361, and 368–369 (RR).

This sequence belongs to the PurK/PurT family. As to quaternary structure, homodimer.

It carries out the reaction N(1)-(5-phospho-beta-D-ribosyl)glycinamide + formate + ATP = N(2)-formyl-N(1)-(5-phospho-beta-D-ribosyl)glycinamide + ADP + phosphate + H(+). The protein operates within purine metabolism; IMP biosynthesis via de novo pathway; N(2)-formyl-N(1)-(5-phospho-D-ribosyl)glycinamide from N(1)-(5-phospho-D-ribosyl)glycinamide (formate route): step 1/1. Involved in the de novo purine biosynthesis. Catalyzes the transfer of formate to 5-phospho-ribosyl-glycinamide (GAR), producing 5-phospho-ribosyl-N-formylglycinamide (FGAR). Formate is provided by PurU via hydrolysis of 10-formyl-tetrahydrofolate. This is Formate-dependent phosphoribosylglycinamide formyltransferase from Xanthomonas oryzae pv. oryzae (strain KACC10331 / KXO85).